Here is a 222-residue protein sequence, read N- to C-terminus: Flagellar L-ring protein (222 aa).

An N-terminal signal peptide occupies residues 1-18; sequence MRRPGAAALAAAALALAG. A lipid anchor (N-palmitoyl cysteine) is attached at cysteine 19. Cysteine 19 carries the S-diacylglycerol cysteine lipid modification.

It belongs to the FlgH family. As to quaternary structure, the basal body constitutes a major portion of the flagellar organelle and consists of four rings (L,P,S, and M) mounted on a central rod.

It is found in the cell outer membrane. It localises to the bacterial flagellum basal body. Assembles around the rod to form the L-ring and probably protects the motor/basal body from shearing forces during rotation. The chain is Flagellar L-ring protein from Burkholderia mallei (strain ATCC 23344).